Reading from the N-terminus, the 243-residue chain is Derlin-1.2 (243 aa).

Residues 1–20 (MSSPAEYYKSLPPISKAYGT) are Cytoplasmic-facing. A helical membrane pass occupies residues 21-41 (LCFFTTVLVRLHILNPLFLYL). Residues 42-54 (YYPRVFKKFEVWR) are Lumenal-facing. Residues 55–75 (IFTSFFFLGPFSINFGIRLLM) form a helical membrane-spanning segment. The Cytoplasmic portion of the chain corresponds to 76–94 (IARYGVMLEKGAFDKRTAD). Residues 95–115 (FLWMMIFGAISLLVLSVIPQL) form a helical membrane-spanning segment. Topologically, residues 116–155 (NTYVLGLPMVSMLVYVWSRENPNAQINIYGILQLKAFYLP) are lumenal. Residues 156 to 176 (WVMLLLDVIFGSPLMPGLLGI) traverse the membrane as a helical segment. Over 177–243 (MVGHLYYYFA…FRGRSYRLNQ (67 aa)) the chain is Cytoplasmic.

Belongs to the derlin family. Expressed in roots and endosperm.

Its subcellular location is the endoplasmic reticulum membrane. May be involved in the degradation process of specific misfolded endoplasmic reticulum (ER) luminal proteins. The protein is Derlin-1.2 (DER1.2) of Zea mays (Maize).